The sequence spans 255 residues: Hydroxyacylglutathione hydrolase (255 aa).

Zn(2+) contacts are provided by His-56, His-58, Asp-60, His-61, His-114, Asp-133, and His-171.

Belongs to the metallo-beta-lactamase superfamily. Glyoxalase II family. Monomer. Zn(2+) is required as a cofactor.

It carries out the reaction an S-(2-hydroxyacyl)glutathione + H2O = a 2-hydroxy carboxylate + glutathione + H(+). It functions in the pathway secondary metabolite metabolism; methylglyoxal degradation; (R)-lactate from methylglyoxal: step 2/2. Functionally, thiolesterase that catalyzes the hydrolysis of S-D-lactoyl-glutathione to form glutathione and D-lactic acid. This chain is Hydroxyacylglutathione hydrolase, found in Chelativorans sp. (strain BNC1).